A 117-amino-acid chain; its full sequence is DNA-binding protein MK1619 (117 aa).

This sequence belongs to the PDCD5 family.

The sequence is that of DNA-binding protein MK1619 from Methanopyrus kandleri (strain AV19 / DSM 6324 / JCM 9639 / NBRC 100938).